Here is a 188-residue protein sequence, read N- to C-terminus: Putative manganese efflux pump MntP (188 aa).

Helical transmembrane passes span 3-23, 39-59, 65-85, 104-124, 125-145, and 167-187; these read MITL…VALG, LGWH…LAGL, IETY…GKMI, GMSL…VGLS, LAIV…IAGV, and IAGG…HTLG.

Belongs to the MntP (TC 9.B.29) family.

The protein resides in the cell inner membrane. In terms of biological role, probably functions as a manganese efflux pump. In Syntrophotalea carbinolica (strain DSM 2380 / NBRC 103641 / GraBd1) (Pelobacter carbinolicus), this protein is Putative manganese efflux pump MntP.